The primary structure comprises 223 residues: Deoxyribose-phosphate aldolase 1 (223 aa).

Aspartate 91 acts as the Proton donor/acceptor in catalysis. Lysine 153 acts as the Schiff-base intermediate with acetaldehyde in catalysis. Lysine 182 functions as the Proton donor/acceptor in the catalytic mechanism.

This sequence belongs to the DeoC/FbaB aldolase family. DeoC type 1 subfamily.

The protein resides in the cytoplasm. The catalysed reaction is 2-deoxy-D-ribose 5-phosphate = D-glyceraldehyde 3-phosphate + acetaldehyde. The protein operates within carbohydrate degradation; 2-deoxy-D-ribose 1-phosphate degradation; D-glyceraldehyde 3-phosphate and acetaldehyde from 2-deoxy-alpha-D-ribose 1-phosphate: step 2/2. Its function is as follows. Catalyzes a reversible aldol reaction between acetaldehyde and D-glyceraldehyde 3-phosphate to generate 2-deoxy-D-ribose 5-phosphate. This Yersinia pestis protein is Deoxyribose-phosphate aldolase 1.